We begin with the raw amino-acid sequence, 224 residues long: Probable C-&gt;U-editing enzyme APOBEC-2 (224 aa).

The interval 1 to 25 (MAQKEEAAAAAEPASQNGEEVENLE) is disordered. Positions 60 and 98 each coordinate Zn(2+). Residues 64-169 (GRNKTFLCYV…PEIQAALRKL (106 aa)) form the CMP/dCMP-type deaminase domain. The active-site Proton donor is the Glu-100. Residues Cys-128 and Cys-131 each contribute to the Zn(2+) site.

It belongs to the cytidine and deoxycytidylate deaminase family. In terms of assembly, homotetramer. It depends on Zn(2+) as a cofactor.

It carries out the reaction cytidine(6666) in apoB mRNA + H2O + H(+) = uridine(6666) in apoB mRNA + NH4(+). In terms of biological role, probable C to U editing enzyme whose physiological substrate is not yet known. Does not display detectable apoB mRNA editing. Has a low intrinsic cytidine deaminase activity. May play a role in the epigenetic regulation of gene expression through the process of active DNA demethylation. The sequence is that of Probable C-&gt;U-editing enzyme APOBEC-2 (APOBEC2) from Bos taurus (Bovine).